Reading from the N-terminus, the 456-residue chain is tRNA-2-methylthio-N(6)-dimethylallyladenosine synthase (456 aa).

The MTTase N-terminal domain occupies 1-116; it reads MTYFFETYGC…FESIFQEIEQ (116 aa). [4Fe-4S] cluster contacts are provided by Cys10, Cys46, Cys79, Cys162, Cys166, and Cys169. Residues 148–384 enclose the Radical SAM core domain; sequence SEGSFQSFIP…IALQMSTTLK (237 aa). The region spanning 387–452 is the TRAM domain; the sequence is RARVGKTLPV…GRTLRAHLVQ (66 aa).

The protein belongs to the methylthiotransferase family. MiaB subfamily. Monomer. [4Fe-4S] cluster is required as a cofactor.

The protein localises to the cytoplasm. It catalyses the reaction N(6)-dimethylallyladenosine(37) in tRNA + (sulfur carrier)-SH + AH2 + 2 S-adenosyl-L-methionine = 2-methylsulfanyl-N(6)-dimethylallyladenosine(37) in tRNA + (sulfur carrier)-H + 5'-deoxyadenosine + L-methionine + A + S-adenosyl-L-homocysteine + 2 H(+). Catalyzes the methylthiolation of N6-(dimethylallyl)adenosine (i(6)A), leading to the formation of 2-methylthio-N6-(dimethylallyl)adenosine (ms(2)i(6)A) at position 37 in tRNAs that read codons beginning with uridine. The chain is tRNA-2-methylthio-N(6)-dimethylallyladenosine synthase from Treponema pallidum (strain Nichols).